The chain runs to 239 residues: Ribosomal RNA small subunit methyltransferase G (239 aa).

Residues G105, L110, 156–157 (VE), and R169 contribute to the S-adenosyl-L-methionine site.

Belongs to the methyltransferase superfamily. RNA methyltransferase RsmG family.

Its subcellular location is the cytoplasm. The catalysed reaction is guanosine(527) in 16S rRNA + S-adenosyl-L-methionine = N(7)-methylguanosine(527) in 16S rRNA + S-adenosyl-L-homocysteine. Functionally, specifically methylates the N7 position of guanine in position 527 of 16S rRNA. The polypeptide is Ribosomal RNA small subunit methyltransferase G (Verminephrobacter eiseniae (strain EF01-2)).